We begin with the raw amino-acid sequence, 81 residues long: Control protein C.BamHI (81 aa).

The HTH cro/C1-type domain occupies 13–68 (VRQIRLSKSNMSQEKLAFECDLHRTYISDIERGTRNVSLDNIEKISKALGVQPKDL). The segment at residues 25-44 (QEKLAFECDLHRTYISDIER) is a DNA-binding region (H-T-H motif).

In terms of biological role, may help modulate methylase (M) and restriction enzyme (R) expression as cells undergo physiological changes such as sporulation or transformation. In Bacillus amyloliquefaciens (Bacillus velezensis), this protein is Control protein C.BamHI.